A 148-amino-acid polypeptide reads, in one-letter code: Glycine cleavage system H protein 5 (148 aa).

The Lipoyl-binding domain maps to 33-115 (VFTIGLTSVA…YGQGWIAKVK (83 aa)). N6-lipoyllysine is present on Lys-74.

It belongs to the GcvH family. As to quaternary structure, the glycine cleavage system is composed of four proteins: P, T, L and H. (R)-lipoate is required as a cofactor.

Its function is as follows. The glycine cleavage system catalyzes the degradation of glycine. The H protein shuttles the methylamine group of glycine from the P protein to the T protein. The sequence is that of Glycine cleavage system H protein 5 from Aquifex aeolicus (strain VF5).